Reading from the N-terminus, the 709-residue chain is Methylmalonyl-CoA mutase (709 aa).

Substrate contacts are provided by residues 73-77 (TIRQY), 183-185 (TIQ), Arg-195, Lys-222, His-232, and 271-273 (RLS). A B12-binding domain is found at 579-709 (RPRMLVVKMG…ILDLIREARS (131 aa)). His-592 is a binding site for adenosylcob(III)alamin.

It belongs to the methylmalonyl-CoA mutase family. In terms of assembly, homodimer. It depends on adenosylcob(III)alamin as a cofactor.

It catalyses the reaction (R)-methylmalonyl-CoA = succinyl-CoA. It functions in the pathway metabolic intermediate metabolism; propanoyl-CoA degradation; succinyl-CoA from propanoyl-CoA: step 3/3. Functionally, radical enzyme that catalyzes the transformation of (2R)-methylmalonyl-CoA to succinyl-CoA. Is involved in the ethylmalonyl-CoA pathway for acetyl-CoA assimilation required for R.sphaeroides growth on acetate as sole carbon source. This is Methylmalonyl-CoA mutase from Cereibacter sphaeroides (strain ATCC 17023 / DSM 158 / JCM 6121 / CCUG 31486 / LMG 2827 / NBRC 12203 / NCIMB 8253 / ATH 2.4.1.) (Rhodobacter sphaeroides).